The primary structure comprises 23 residues: Acidic phospholipase A2 CHA-E6b (23 aa).

This sequence belongs to the phospholipase A2 family. Group II subfamily. D49 sub-subfamily. It depends on Ca(2+) as a cofactor. Post-translationally, contains 7 disulfide bonds. Expressed by the venom gland.

The protein resides in the secreted. The catalysed reaction is a 1,2-diacyl-sn-glycero-3-phosphocholine + H2O = a 1-acyl-sn-glycero-3-phosphocholine + a fatty acid + H(+). Functionally, snake venom phospholipase A2 (PLA2) that shows high lipolytic (1200 umol/mg/min) and weak ADP-induced platelet aggregation activities. Also shows weak anticoagulant activity (IC(50) of about 1.0 uM). PLA2 catalyzes the calcium-dependent hydrolysis of the 2-acyl groups in 3-sn-phosphoglycerides. The sequence is that of Acidic phospholipase A2 CHA-E6b from Crotalus horridus (Timber rattlesnake).